We begin with the raw amino-acid sequence, 187 residues long: Pterin-4-alpha-carbinolamine dehydratase 2, mitochondrial (187 aa).

A mitochondrion-targeting transit peptide spans M1–F33.

Belongs to the pterin-4-alpha-carbinolamine dehydratase family.

Its subcellular location is the mitochondrion. The catalysed reaction is (4aS,6R)-4a-hydroxy-L-erythro-5,6,7,8-tetrahydrobiopterin = (6R)-L-erythro-6,7-dihydrobiopterin + H2O. Functionally, involved in tetrahydrobiopterin biosynthesis. Possesses pterin-4-alpha-carbinolamine dehydratase activity when expressed in a bacterial heterolgous system. This chain is Pterin-4-alpha-carbinolamine dehydratase 2, mitochondrial, found in Arabidopsis thaliana (Mouse-ear cress).